The primary structure comprises 94 residues: Co-chaperonin GroES (94 aa).

Belongs to the GroES chaperonin family. Heptamer of 7 subunits arranged in a ring. Interacts with the chaperonin GroEL.

It is found in the cytoplasm. Functionally, together with the chaperonin GroEL, plays an essential role in assisting protein folding. The GroEL-GroES system forms a nano-cage that allows encapsulation of the non-native substrate proteins and provides a physical environment optimized to promote and accelerate protein folding. GroES binds to the apical surface of the GroEL ring, thereby capping the opening of the GroEL channel. The protein is Co-chaperonin GroES of Brevibacillus brevis (strain 47 / JCM 6285 / NBRC 100599).